The primary structure comprises 464 residues: UDP-glucose:undecaprenyl-phosphate glucose-1-phosphate transferase (464 aa).

The Cytoplasmic portion of the chain corresponds to 1 to 15 (MTNLKKRERAKTNAS). The chain crosses the membrane as a helical span at residues 16–36 (LISMVQRFSDITIMFAGLWLV). Topologically, residues 37-38 (CE) are periplasmic. Residues 39–59 (VSGLSFLYMHLLVALITLVVF) form a helical membrane-spanning segment. At 60-80 (QMLGGITDFYRSWRGVRAATE) the chain is on the cytoplasmic side. Residues 81–101 (FALLLQNWTLSVIFSAGLVAF) form a helical membrane-spanning segment. Topologically, residues 102 to 104 (NND) are periplasmic. Residues 105 to 125 (FDTQLKIWLAWYALTSIGLVV) form a helical membrane-spanning segment. At 126–278 (CRSCIRIGAG…VNRLLKRAED (153 aa)) the chain is on the cytoplasmic side. The helical transmembrane segment at 279-299 (IVLATLILLLISPVLCCIALA) threads the bilayer. The Periplasmic segment spans residues 300-464 (VKLSSPGPVI…FKGFVNKAAY (165 aa)).

This sequence belongs to the bacterial sugar transferase family.

It is found in the cell inner membrane. It carries out the reaction di-trans,octa-cis-undecaprenyl phosphate + UDP-alpha-D-glucose = alpha-D-glucosyl di-trans,octa-cis-undecaprenyl diphosphate + UMP. It functions in the pathway exopolysaccharide biosynthesis; colanic acid biosynthesis. In terms of biological role, is the initiating enzyme for colanic acid (CA) synthesis. Catalyzes the transfer of the glucose-1-phosphate moiety from UDP-Glc onto the carrier lipid undecaprenyl phosphate (C55-P), forming a phosphoanhydride bond yielding to glucosyl-pyrophosphoryl-undecaprenol (Glc-PP-C55). Also possesses a weak galactose-1-P transferase activity. This is UDP-glucose:undecaprenyl-phosphate glucose-1-phosphate transferase (wcaJ) from Escherichia coli (strain K12).